The chain runs to 2055 residues: Dedicator of cytokinesis protein 9 (2055 aa).

Phosphoserine occurs at positions 178 and 181. A PH domain is found at 185-292; sequence GITKHGWLYK…WVTVLNKILQ (108 aa). The disordered stretch occupies residues 301–326; the sequence is EKRNGDPHEDDEQSKLEGSGSGLDSY. Phosphoserine is present on residues serine 444 and serine 453. In terms of domain architecture, C2 DOCK-type spans 649 to 827; the sequence is SNHLYVYPKY…PLLKISTHLV (179 aa). Phosphoserine is present on residues serine 936 and serine 1244. The residue at position 1250 (threonine 1250) is a Phosphothreonine. The disordered stretch occupies residues 1253–1291; sequence INSVRNADSRGSLISTDSGNSLPDRNPEKSNSLDKQQQS. 3 positions are modified to phosphoserine: serine 1264, serine 1270, and serine 1273. Residues 1264–1276 are compositionally biased toward polar residues; the sequence is SLISTDSGNSLPD. Residues 1614–2055 form the DOCKER domain; it reads KSYASTPELR…LSDIMREQMG (442 aa). An interaction with CDC42 region spans residues 1679 to 2055; the sequence is DEEASMMEDV…LSDIMREQMG (377 aa).

The protein belongs to the DOCK family. As to quaternary structure, homodimer. Interacts preferentially with nucleotide-depleted CDC42. As to expression, expressed in lung. Also detected in Peyers patches, thymus, brain and lymph nodes. Expressed in Purkinje cells.

Its subcellular location is the endomembrane system. Its function is as follows. Guanine nucleotide-exchange factor (GEF) that activates CDC42 by exchanging bound GDP for free GTP. Overexpression induces filopodia formation. This is Dedicator of cytokinesis protein 9 from Mus musculus (Mouse).